Reading from the N-terminus, the 418-residue chain is 3-isopropylmalate dehydratase large subunit 1 (418 aa).

[4Fe-4S] cluster contacts are provided by Cys-298, Cys-358, and Cys-361.

This sequence belongs to the aconitase/IPM isomerase family. LeuC type 2 subfamily. As to quaternary structure, heterodimer of LeuC and LeuD. [4Fe-4S] cluster is required as a cofactor.

The catalysed reaction is (2R,3S)-3-isopropylmalate = (2S)-2-isopropylmalate. It participates in amino-acid biosynthesis; L-leucine biosynthesis; L-leucine from 3-methyl-2-oxobutanoate: step 2/4. In terms of biological role, catalyzes the isomerization between 2-isopropylmalate and 3-isopropylmalate, via the formation of 2-isopropylmaleate. The chain is 3-isopropylmalate dehydratase large subunit 1 from Archaeoglobus fulgidus (strain ATCC 49558 / DSM 4304 / JCM 9628 / NBRC 100126 / VC-16).